The primary structure comprises 275 residues: uncharacterized protein (275 aa).

The Mg(2+) site is built by glutamate 71, aspartate 85, isoleucine 87, and aspartate 88. Residue glutamate 71 participates in substrate binding. 87 to 90 (IDGT) serves as a coordination point for substrate. The next 3 helical transmembrane spans lie at 87–107 (IDGT…IAFV), 112–132 (PVLG…SVDG), and 178–198 (IVCL…RLAG). Aspartate 208 provides a ligand contact to Mg(2+). A substrate-binding site is contributed by aspartate 208.

The protein belongs to the inositol monophosphatase superfamily.

Its subcellular location is the cell membrane. This is an uncharacterized protein from Sinorhizobium fredii (strain NBRC 101917 / NGR234).